A 200-amino-acid polypeptide reads, in one-letter code: Phospholipase A2 inhibitor CgMIP-I (200 aa).

The N-terminal stretch at 1-19 is a signal peptide; sequence MKYLHTICLLFIFVARGNS. Cystine bridges form between Cys22–Cys46, Cys25–Cys32, Cys39–Cys67, Cys73–Cys94, Cys95–Cys100, Cys118–Cys143, and Cys136–Cys165. A glycan (N-linked (GlcNAc...) asparagine) is linked at Asn176.

Belongs to the CNF-like-inhibitor family. As to quaternary structure, homomer of 110 kDa composed of 20-25-kDa subunits. In terms of processing, N-glycosylated. The glycosidic chain may contain superficial sialic acid residues. Expressed by the liver.

It is found in the secreted. In terms of biological role, inhibits the enzymatic activity of basic phospholipase A2. Specifically neutralizes PLA2, myotoxic, edema-forming, cytolytic, and anti-coagulant activities, as well as intracerebral lethal effect of the basic myotoxin I from the same venom (AC P0DQP6), crotoxin heterodimer and crotoxin subunit B alone. Does not block the enzymatic activity of crude acidic PLA2 fractions from the same venom. This chain is Phospholipase A2 inhibitor CgMIP-I, found in Cerrophidion godmani (Porthidium godmani).